A 354-amino-acid polypeptide reads, in one-letter code: 3'-5' exonuclease (354 aa).

Residues 1–120 (MERYLTKMPI…PSPEKEKPEK (120 aa)) form a disordered region. Positions 13 to 50 (KANEVPKKEAFAKKETPKVARKATKTDTPKELKDKENA) are enriched in basic and acidic residues. The span at 59 to 70 (TKGRPGRPAAKR) shows a compositional bias: basic residues. The span at 71 to 91 (KNLDTPDVKDEKIAMEEENPP) shows a compositional bias: basic and acidic residues. Ser104, Ser110, and Ser112 each carry phosphoserine. The region spanning 149–314 (WVEKQKDDVV…GQVIYRELER (166 aa)) is the 3'-5' exonuclease domain. Positions 163, 165, and 301 each coordinate Mg(2+).

Belongs to the WRNexo family.

The protein localises to the nucleus. In terms of biological role, has exonuclease activity on both single-stranded and duplex templates bearing overhangs, but not blunt ended duplex DNA, and cleaves in a 3'-5' direction. Essential for the formation of DNA replication focal centers. Has an important role in maintaining genome stability. This Drosophila sechellia (Fruit fly) protein is 3'-5' exonuclease.